Reading from the N-terminus, the 165-residue chain is Probable deoxyuridine 5'-triphosphate nucleotidohydrolase (165 aa).

Positions 39–49 are enriched in basic and acidic residues; that stretch reads GRIDTDGKTIG. The interval 39–64 is disordered; the sequence is GRIDTDGKTIGDRSPVTPTADEDSTD.

This sequence belongs to the dCTP deaminase family. Archaeal dUTPase subfamily.

It catalyses the reaction dUTP + H2O = dUMP + diphosphate + H(+). It functions in the pathway pyrimidine metabolism; dUMP biosynthesis; dUMP from dCTP (dUTP route): step 2/2. This enzyme is involved in nucleotide metabolism: it produces dUMP, the immediate precursor of thymidine nucleotides and it decreases the intracellular concentration of dUTP so that uracil cannot be incorporated into DNA. The protein is Probable deoxyuridine 5'-triphosphate nucleotidohydrolase of Halobacterium salinarum (strain ATCC 29341 / DSM 671 / R1).